The primary structure comprises 91 residues: uncharacterized protein (91 aa).

It localises to the plastid. The protein localises to the chloroplast. This is an uncharacterized protein from Phalaenopsis aphrodite subsp. formosana (Moth orchid).